The following is a 132-amino-acid chain: Small ribosomal subunit protein uS8 (132 aa).

This sequence belongs to the universal ribosomal protein uS8 family. As to quaternary structure, part of the 30S ribosomal subunit. Contacts proteins S5 and S12.

Functionally, one of the primary rRNA binding proteins, it binds directly to 16S rRNA central domain where it helps coordinate assembly of the platform of the 30S subunit. The sequence is that of Small ribosomal subunit protein uS8 from Rhodococcus erythropolis (strain PR4 / NBRC 100887).